The primary structure comprises 819 residues: Advillin (819 aa).

The tract at residues 1–731 (MSLSSAFRAV…YEQLKNELGD (731 aa)) is core. One copy of the Gelsolin-like 1 repeat lies at 24-73 (MELALVPLSAHGNFYEGDCYIVLSTRRVGSLLSQNIHFWIGKDSSQDEQS). Tyrosine 85 bears the Phosphotyrosine mark. Residues 109-116 (KQGIIYKK) and 135-143 (RLLHVKGKR) each bind a 1,2-diacyl-sn-glycero-3-phospho-(1D-myo-inositol-4,5-bisphosphate). 5 Gelsolin-like repeats span residues 145 to 185 (IQAT…GERL), 262 to 306 (LSVT…VEKQ), 403 to 454 (ENLE…DELA), 525 to 565 (TKAV…DERA), and 628 to 669 (FLVT…TEKK). The tract at residues 628–819 (FLVTEVTDFT…LQLKKERGLF (192 aa)) is required for interaction with F-actin. Residues 732–819 (ATAIVRITAD…LQLKKERGLF (88 aa)) form a headpiece region. Tyrosine 748 and tyrosine 758 each carry phosphotyrosine. The 67-residue stretch at 753–819 (DGEPKYYPVE…LQLKKERGLF (67 aa)) folds into the HP domain.

It belongs to the villin/gelsolin family. In terms of assembly, associates (via C-terminus) with actin. Interacts with F-actin. Interacts with SCARF1; the interaction occurs in embryonic dorsal root ganglions at 18 dpc and induces neurite-like outgrowth. Interacts with PLCE1. Interacts with ACTR2 and ACTR3; associates with the ARP2/3 complex. In terms of tissue distribution, most highly expressed in the endometrium of the uterus, the intestinal villi and the testes. Weaker expression also detected in the brain, dorsal root ganglions and on the surface of the tongue.

The protein resides in the cytoplasm. It localises to the cytoskeleton. It is found in the cell projection. The protein localises to the lamellipodium. Its subcellular location is the cell junction. The protein resides in the focal adhesion. It localises to the neuron projection. It is found in the axon. In terms of biological role, ca(2+)-regulated actin-binding protein which plays an important role in actin bundling. May have a unique function in the morphogenesis of neuronal cells which form ganglia. Required for SREC1-mediated regulation of neurite-like outgrowth. Plays a role in regenerative sensory axon outgrowth and remodeling processes after peripheral injury in neonates. Involved in the formation of long fine actin-containing filopodia-like structures in fibroblast. Plays a role in ciliogenesis. In podocytes, controls lamellipodia formation through the regulation of EGF-induced diacylglycerol generation by PLCE1 and ARP2/3 complex assembly. The sequence is that of Advillin from Mus musculus (Mouse).